A 351-amino-acid polypeptide reads, in one-letter code: MAAAAPATAAVRRMKLGSQGLEVSAQGLGCMGMSAFYGPPKPEPDMVALIHHAVAAGVTLLDTSDIYGPHTNELLLGKALQGGVRDKVELATKFGIAFEDGKRGVRGDPAYVRAACEGSLRRLGVDSIDLYYQHRVDKKVPIEVTIGELKKLVEEGKIKYIGLSEASASTIRRAHAVHPITAVQLEWSLWSRDVEEDIIPTCRELGIGIVAYSPLGRGFFSAGAKLVESLSDQDFRKHIPRFQQENLEKNAEIFERVNAMAARKGCTPSQLALAWVHHQGSDVCPIPGTTKIENLNQNIGALSVKLTPEEMAELESYASTDDVRGDRYPQAMANTTWQNSETPPLSSWKAQ.

The active-site Proton donor is Tyr-67. Residue His-134 participates in substrate binding. 213-223 contributes to the NADP(+) binding site; it reads SPLGRGFFSAG. The disordered stretch occupies residues 317–351; it reads YASTDDVRGDRYPQAMANTTWQNSETPPLSSWKAQ. The span at 332-351 shows a compositional bias: polar residues; that stretch reads MANTTWQNSETPPLSSWKAQ.

This sequence belongs to the aldo/keto reductase family.

The sequence is that of Probable aldo-keto reductase 2 from Oryza sativa subsp. indica (Rice).